The chain runs to 74 residues: ATP synthase subunit c (74 aa).

2 helical membrane-spanning segments follow: residues 8 to 28 (FIGIGLMAIGMYGAALGVSNI) and 52 to 72 (IGAGLAEAMGLFSFVIAMLLI).

This sequence belongs to the ATPase C chain family. In terms of assembly, F-type ATPases have 2 components, F(1) - the catalytic core - and F(0) - the membrane proton channel. F(1) has five subunits: alpha(3), beta(3), gamma(1), delta(1), epsilon(1). F(0) has three main subunits: a(1), b(2) and c(10-14). The alpha and beta chains form an alternating ring which encloses part of the gamma chain. F(1) is attached to F(0) by a central stalk formed by the gamma and epsilon chains, while a peripheral stalk is formed by the delta and b chains.

It localises to the cell inner membrane. F(1)F(0) ATP synthase produces ATP from ADP in the presence of a proton or sodium gradient. F-type ATPases consist of two structural domains, F(1) containing the extramembraneous catalytic core and F(0) containing the membrane proton channel, linked together by a central stalk and a peripheral stalk. During catalysis, ATP synthesis in the catalytic domain of F(1) is coupled via a rotary mechanism of the central stalk subunits to proton translocation. Its function is as follows. Key component of the F(0) channel; it plays a direct role in translocation across the membrane. A homomeric c-ring of between 10-14 subunits forms the central stalk rotor element with the F(1) delta and epsilon subunits. This Rickettsia felis (strain ATCC VR-1525 / URRWXCal2) (Rickettsia azadi) protein is ATP synthase subunit c.